The following is a 223-amino-acid chain: UPF0641 membrane protein PJ4664.05 (223 aa).

The next 5 helical transmembrane spans lie at 10–30 (FNSF…FNWI), 49–69 (LTVL…FSDI), 81–101 (ILLY…WSIV), 146–166 (LSIG…MLWV), and 190–210 (TIFY…LKMV).

Belongs to the UPF0641 family.

The protein resides in the endoplasmic reticulum membrane. The chain is UPF0641 membrane protein PJ4664.05 from Schizosaccharomyces pombe (strain 972 / ATCC 24843) (Fission yeast).